The primary structure comprises 578 residues: Sulfite reductase [NADPH] hemoprotein beta-component (578 aa).

Polar residues predominate over residues 1–11 (MSANQQSNSQE). Positions 1 to 20 (MSANQQSNSQEVLGEVLGPL) are disordered. Cys-441, Cys-447, Cys-487, and Cys-491 together coordinate [4Fe-4S] cluster. Cys-491 contacts siroheme.

It belongs to the nitrite and sulfite reductase 4Fe-4S domain family. In terms of assembly, alpha(8)-beta(8). The alpha component is a flavoprotein, the beta component is a hemoprotein. It depends on siroheme as a cofactor. [4Fe-4S] cluster serves as cofactor.

It carries out the reaction hydrogen sulfide + 3 NADP(+) + 3 H2O = sulfite + 3 NADPH + 4 H(+). It participates in sulfur metabolism; hydrogen sulfide biosynthesis; hydrogen sulfide from sulfite (NADPH route): step 1/1. Functionally, component of the sulfite reductase complex that catalyzes the 6-electron reduction of sulfite to sulfide. This is one of several activities required for the biosynthesis of L-cysteine from sulfate. The chain is Sulfite reductase [NADPH] hemoprotein beta-component from Vibrio campbellii (strain ATCC BAA-1116).